Here is a 428-residue protein sequence, read N- to C-terminus: Elongation factor 1-alpha (428 aa).

Positions 5–215 (KPHVNIVFIG…ALDQIPEPPK (211 aa)) constitute a tr-type G domain. The interval 14-21 (GHVDHGKS) is G1. GTP is bound at residue 14–21 (GHVDHGKS). Residue serine 21 coordinates Mg(2+). The tract at residues 68-72 (GITID) is G2. The interval 89-92 (DAPG) is G3. GTP contacts are provided by residues 89-93 (DAPGH) and 144-147 (NKMD). Residues 144-147 (NKMD) form a G4 region. The G5 stretch occupies residues 181 to 183 (SAW).

The protein belongs to the TRAFAC class translation factor GTPase superfamily. Classic translation factor GTPase family. EF-Tu/EF-1A subfamily.

The protein localises to the cytoplasm. It carries out the reaction GTP + H2O = GDP + phosphate + H(+). In terms of biological role, GTP hydrolase that promotes the GTP-dependent binding of aminoacyl-tRNA to the A-site of ribosomes during protein biosynthesis. The protein is Elongation factor 1-alpha of Thermococcus gammatolerans (strain DSM 15229 / JCM 11827 / EJ3).